Here is a 224-residue protein sequence, read N- to C-terminus: Flagellar L-ring protein (224 aa).

The signal sequence occupies residues 1-15 (MARYFILAVALLLTA). Cys16 carries N-palmitoyl cysteine lipidation. Residue Cys16 is the site of S-diacylglycerol cysteine attachment.

Belongs to the FlgH family. In terms of assembly, the basal body constitutes a major portion of the flagellar organelle and consists of four rings (L,P,S, and M) mounted on a central rod.

The protein localises to the cell outer membrane. Its subcellular location is the bacterial flagellum basal body. Assembles around the rod to form the L-ring and probably protects the motor/basal body from shearing forces during rotation. The sequence is that of Flagellar L-ring protein from Shewanella sp. (strain MR-7).